Reading from the N-terminus, the 156-residue chain is Putative HTH-type transcriptional regulator YwgB (156 aa).

The HTH rrf2-type domain maps to 2–133; it reads KMKSGMEQAV…REESLQHVMD (132 aa).

The protein is Putative HTH-type transcriptional regulator YwgB (ywgB) of Bacillus subtilis (strain 168).